The following is a 72-amino-acid chain: Translation initiation factor IF-1 (72 aa).

Residues 1–72 (MSKEDVIEMQ…TRGRITWRAK (72 aa)) enclose the S1-like domain.

It belongs to the IF-1 family. In terms of assembly, component of the 30S ribosomal translation pre-initiation complex which assembles on the 30S ribosome in the order IF-2 and IF-3, IF-1 and N-formylmethionyl-tRNA(fMet); mRNA recruitment can occur at any time during PIC assembly.

It is found in the cytoplasm. Functionally, one of the essential components for the initiation of protein synthesis. Stabilizes the binding of IF-2 and IF-3 on the 30S subunit to which N-formylmethionyl-tRNA(fMet) subsequently binds. Helps modulate mRNA selection, yielding the 30S pre-initiation complex (PIC). Upon addition of the 50S ribosomal subunit IF-1, IF-2 and IF-3 are released leaving the mature 70S translation initiation complex. This Clostridium acetobutylicum (strain ATCC 824 / DSM 792 / JCM 1419 / IAM 19013 / LMG 5710 / NBRC 13948 / NRRL B-527 / VKM B-1787 / 2291 / W) protein is Translation initiation factor IF-1.